The sequence spans 564 residues: Septation ring formation regulator EzrA (564 aa).

Residues 1-4 (MVLY) lie on the Extracellular side of the membrane. The helical transmembrane segment at 5 to 23 (IILAIIVIILIAVGVLFYL) threads the bilayer. Topologically, residues 24-564 (RSNKRQIIEK…KHIEEEVIKQ (541 aa)) are cytoplasmic. Coiled-coil stretches lie at residues 99 to 138 (SFNASQSEIDDANELMDSYEQSYQQQLEDVNEIIALYKDN), 190 to 223 (DGNYVQAHNHIAALNEQMKQLRSYMEEIPELIRE), 271 to 300 (LISRLELEEANDKLANINDKLDDMYDLIEH), 350 to 435 (VRQF…RRLL), and 471 to 550 (VKQL…ESVE).

This sequence belongs to the EzrA family.

It localises to the cell membrane. Functionally, negative regulator of FtsZ ring formation; modulates the frequency and position of FtsZ ring formation. Inhibits FtsZ ring formation at polar sites. Interacts either with FtsZ or with one of its binding partners to promote depolymerization. In Staphylococcus aureus (strain NCTC 8325 / PS 47), this protein is Septation ring formation regulator EzrA.